Here is a 247-residue protein sequence, read N- to C-terminus: Carboxy-S-adenosyl-L-methionine synthase (247 aa).

Residues tyrosine 40, 65 to 67 (GCS), 90 to 91 (DN), 122 to 123 (DI), asparagine 137, and arginine 204 contribute to the S-adenosyl-L-methionine site.

The protein belongs to the class I-like SAM-binding methyltransferase superfamily. Cx-SAM synthase family. In terms of assembly, homodimer.

The enzyme catalyses prephenate + S-adenosyl-L-methionine = carboxy-S-adenosyl-L-methionine + 3-phenylpyruvate + H2O. Functionally, catalyzes the conversion of S-adenosyl-L-methionine (SAM) to carboxy-S-adenosyl-L-methionine (Cx-SAM). The chain is Carboxy-S-adenosyl-L-methionine synthase from Stutzerimonas stutzeri (strain A1501) (Pseudomonas stutzeri).